The following is a 1258-amino-acid chain: Phosphatidylinositol 3,4,5-trisphosphate 5-phosphatase 2 (1258 aa).

The SH2 domain maps to 21 to 117; that stretch reads WYHRDLSRAA…GLVCALLLPV (97 aa). The segment covering 119–132 has biased composition (basic and acidic residues); it reads GEREPDPPDDRDAS. Residues 119 to 180 are disordered; it reads GEREPDPPDD…AESAPNGLST (62 aa). The residue at position 132 (S132) is a Phosphoserine. The span at 145-155 shows a compositional bias: polar residues; it reads SGSTSISAPTG. Residues 156-166 are compositionally biased toward pro residues; sequence PSSPLPAPETP. T165 carries the phosphothreonine modification. 2 positions are modified to phosphoserine: S241 and S352. At Y886 the chain carries Phosphotyrosine. S890 is subject to Phosphoserine. Residues 897-1118 form a disordered region; it reads GAKSKAPSVS…FLGEVASGDD (222 aa). Residues 938–950 are compositionally biased toward pro residues; sequence PPPTGRPPAPPRA. An SH3-binding motif is present at residues 944–949; it reads PPAPPR. Basic and acidic residues predominate over residues 951–965; it reads APREEPLTPRLKPEG. T958 is modified (phosphothreonine). The NPXY motif motif lies at 983-986; it reads NPAY. The residue at position 986 (Y986) is a Phosphotyrosine; by SRC. 3 stretches are compositionally biased toward pro residues: residues 996-1007, 1048-1059, and 1087-1104; these read LLPPEPPSPARA, LPPPDFPPPPLP, and GPPPPKAHPRPPLPPGPS. Position 1131 is a phosphoserine (S1131). Y1135 and Y1162 each carry phosphotyrosine. In terms of domain architecture, SAM spans 1196-1258; it reads LGEAGMSAWL…LLLDTLQLSK (63 aa). S1257 bears the Phosphoserine mark.

This sequence belongs to the inositol 1,4,5-trisphosphate 5-phosphatase family. Interacts with tyrosine phosphorylated form of SHC1. Interacts with EGFR. Upon stimulation by the EGF signaling pathway, it forms a complex with SHC1 and EGFR. Interacts with cytoskeletal protein SORBS3/vinexin, promoting its localization to the periphery of cells. Forms a complex with filamin (FLNA or FLNB), actin, GPIb (GP1BA or GP1BB) that regulates cortical and submembraneous actin. Interacts with c-Met/MET, when c-Met/MET is phosphorylated on 'Tyr-1356'. Interacts with p130Cas/BCAR1. Interacts with CENTD3/ARAP3 via its SAM domain. Interacts with c-Cbl/CBL and CAP/SORBS1. Interacts with activated EPHA2 receptor. Interacts with receptor FCGR2A. Interacts with receptor FCGR2B. Interacts with tyrosine kinase ABL1. Interacts with tyrosine kinase TEC. Interacts with CSF1R. Interacts (via N-terminus) with SH3YL1 (via SH3 domain). Interacts with FCRL6 (tyrosine phosphorylated form). Interacts (via SH2 domain) with tyrosine phosphorylated KLRC1 (via ITIM). Interacts with NEDD9/HEF1. In terms of processing, tyrosine phosphorylated by the members of the SRC family after exposure to a diverse array of extracellular stimuli such as insulin, growth factors such as EGF or PDGF, chemokines, integrin ligands and hypertonic and oxidative stress. May be phosphorylated upon IgG receptor FCGR2B-binding. Phosphorylated at Tyr-986 following cell attachment and spreading. Phosphorylated at Tyr-1162 following EGF signaling pathway stimulation. Phosphorylated at Thr-958 in response to PDGF. In terms of tissue distribution, widely expressed, most prominently in skeletal muscle, heart and brain. Present in platelets. Expressed in transformed myeloid cells and in primary macrophages, but not in peripheral blood monocytes.

It localises to the cytoplasm. Its subcellular location is the cytosol. The protein localises to the cytoskeleton. It is found in the membrane. The protein resides in the cell projection. It localises to the filopodium. Its subcellular location is the lamellipodium. The protein localises to the basal cell membrane. It is found in the nucleus. The protein resides in the nucleus speckle. It localises to the spindle pole. It carries out the reaction a 1,2-diacyl-sn-glycero-3-phospho-(1D-myo-inositol-3,4,5-trisphosphate) + H2O = a 1,2-diacyl-sn-glycero-3-phospho-(1D-myo-inositol-3,4-bisphosphate) + phosphate. The enzyme catalyses 1,2-dioctanoyl-sn-glycero-3-phospho-(1D-myo-inositol-3,4,5-trisphosphate) + H2O = 1,2-dioctanoyl-sn-glycero-3-phospho-(1D-myo-inositol-3,4-bisphosphate) + phosphate. It catalyses the reaction 1,2-dihexadecanoyl-sn-glycero-3-phospho-(1D-myo-inositol-3,4,5-trisphosphate) + H2O = 1,2-dihexadecanoyl-sn-glycero-3-phospho-(1D-myo-inositol-3,4-bisphosphate) + phosphate. Activated upon translocation to the sites of synthesis of PtdIns(3,4,5)P3 in the membrane. Enzymatic activity is enhanced in the presence of phosphatidylserine. In terms of biological role, phosphatidylinositol (PtdIns) phosphatase that specifically hydrolyzes the 5-phosphate of phosphatidylinositol-3,4,5-trisphosphate (PtdIns(3,4,5)P3) to produce PtdIns(3,4)P2, thereby negatively regulating the PI3K (phosphoinositide 3-kinase) pathways. Required for correct mitotic spindle orientation and therefore progression of mitosis. Plays a central role in regulation of PI3K-dependent insulin signaling, although the precise molecular mechanisms and signaling pathways remain unclear. While overexpression reduces both insulin-stimulated MAP kinase and Akt activation, its absence does not affect insulin signaling or GLUT4 trafficking. Confers resistance to dietary obesity. May act by regulating AKT2, but not AKT1, phosphorylation at the plasma membrane. Part of a signaling pathway that regulates actin cytoskeleton remodeling. Required for the maintenance and dynamic remodeling of actin structures as well as in endocytosis, having a major impact on ligand-induced EGFR internalization and degradation. Participates in regulation of cortical and submembraneous actin by hydrolyzing PtdIns(3,4,5)P3 thereby regulating membrane ruffling. Regulates cell adhesion and cell spreading. Required for HGF-mediated lamellipodium formation, cell scattering and spreading. Acts as a negative regulator of EPHA2 receptor endocytosis by inhibiting via PI3K-dependent Rac1 activation. Acts as a regulator of neuritogenesis by regulating PtdIns(3,4,5)P3 level and is required to form an initial protrusive pattern, and later, maintain proper neurite outgrowth. Acts as a negative regulator of the FC-gamma-RIIA receptor (FCGR2A). Mediates signaling from the FC-gamma-RIIB receptor (FCGR2B), playing a central role in terminating signal transduction from activating immune/hematopoietic cell receptor systems. Involved in EGF signaling pathway. Upon stimulation by EGF, it is recruited by EGFR and dephosphorylates PtdIns(3,4,5)P3. Plays a negative role in regulating the PI3K-PKB pathway, possibly by inhibiting PKB activity. Down-regulates Fc-gamma-R-mediated phagocytosis in macrophages independently of INPP5D/SHIP1. In macrophages, down-regulates NF-kappa-B-dependent gene transcription by regulating macrophage colony-stimulating factor (M-CSF)-induced signaling. Plays a role in the localization of AURKA and NEDD9/HEF1 to the basolateral membrane at interphase in polarized cysts, thereby mediates cell cycle homeostasis, cell polarization and cilia assembly. Additionally promotion of cilia growth is also facilitated by hydrolysis of (PtdIns(3,4,5)P3) to PtdIns(3,4)P2. Promotes formation of apical membrane-initiation sites during the initial stages of lumen formation via Rho family-induced actin filament organization and CTNNB1 localization to cell-cell contacts. May also hydrolyze PtdIns(1,3,4,5)P4, and could thus affect the levels of the higher inositol polyphosphates like InsP6. Involved in endochondral ossification. The protein is Phosphatidylinositol 3,4,5-trisphosphate 5-phosphatase 2 of Homo sapiens (Human).